The chain runs to 423 residues: p-aminobenzoyl-glutamate hydrolase subunit A homolog (423 aa).

The protein belongs to the peptidase M20 family. The cofactor is Mn(2+).

Catalyzes the cleavage of p-aminobenzoyl-glutamate (PABA-GLU) to form p-aminobenzoate (PABA) and glutamate. In Haemophilus influenzae (strain ATCC 51907 / DSM 11121 / KW20 / Rd), this protein is p-aminobenzoyl-glutamate hydrolase subunit A homolog (abgA).